A 61-amino-acid chain; its full sequence is Conotoxin Bt5.1 (61 aa).

An N-terminal signal peptide occupies residues 1–22 (MRGLPVFVILLLLIASEPSVDA). Residues 23-48 (RPKTKADVPLTSLNDNAKRTLQILRN) constitute a propeptide that is removed on maturation.

Belongs to the conotoxin T superfamily. Post-translationally, contains 2 disulfide bonds that can be either 'C1-C3, C2-C4' or 'C1-C4, C2-C3', since these disulfide connectivities have been observed for conotoxins with cysteine framework V (for examples, see AC P0DQQ7 and AC P81755). Expressed by the venom duct.

Its subcellular location is the secreted. This Conus betulinus (Beech cone) protein is Conotoxin Bt5.1.